A 639-amino-acid polypeptide reads, in one-letter code: Threonine--tRNA ligase (639 aa).

A TGS domain is found at 1-61 (MATVRLPDGK…DGGGELEFVT (61 aa)). Residues 239-536 (DHRRLGRELG…LIEHYAGAFP (298 aa)) are catalytic. Zn(2+) contacts are provided by C333, H384, and H513.

It belongs to the class-II aminoacyl-tRNA synthetase family. As to quaternary structure, homodimer. Requires Zn(2+) as cofactor.

It is found in the cytoplasm. The catalysed reaction is tRNA(Thr) + L-threonine + ATP = L-threonyl-tRNA(Thr) + AMP + diphosphate + H(+). Catalyzes the attachment of threonine to tRNA(Thr) in a two-step reaction: L-threonine is first activated by ATP to form Thr-AMP and then transferred to the acceptor end of tRNA(Thr). Also edits incorrectly charged L-seryl-tRNA(Thr). The chain is Threonine--tRNA ligase from Rubrobacter xylanophilus (strain DSM 9941 / JCM 11954 / NBRC 16129 / PRD-1).